A 464-amino-acid chain; its full sequence is Methylenetetrahydrofolate--tRNA-(uracil-5-)-methyltransferase TrmFO (464 aa).

13 to 18 (GGGLAG) lines the FAD pocket.

Belongs to the MnmG family. TrmFO subfamily. Requires FAD as cofactor.

The protein resides in the cytoplasm. It catalyses the reaction uridine(54) in tRNA + (6R)-5,10-methylene-5,6,7,8-tetrahydrofolate + NADH + H(+) = 5-methyluridine(54) in tRNA + (6S)-5,6,7,8-tetrahydrofolate + NAD(+). It carries out the reaction uridine(54) in tRNA + (6R)-5,10-methylene-5,6,7,8-tetrahydrofolate + NADPH + H(+) = 5-methyluridine(54) in tRNA + (6S)-5,6,7,8-tetrahydrofolate + NADP(+). Catalyzes the folate-dependent formation of 5-methyl-uridine at position 54 (M-5-U54) in all tRNAs. The protein is Methylenetetrahydrofolate--tRNA-(uracil-5-)-methyltransferase TrmFO of Bartonella bacilliformis (strain ATCC 35685 / KC583 / Herrer 020/F12,63).